The sequence spans 381 residues: Neuropeptide Y receptor type 2 (381 aa).

Residues 1-37 (MGPIGTEADENQTVEEIKVEPYGPGHTTPRGELAPDP) are disordered. The Extracellular portion of the chain corresponds to 1 to 52 (MGPIGTEADENQTVEEIKVEPYGPGHTTPRGELAPDPEPELIDSTKLTEVRV). Residue Asn-11 is glycosylated (N-linked (GlcNAc...) asparagine). Residues 53–73 (VLILAYCSIILLGVVGNSLVI) form a helical membrane-spanning segment. Residues 74–87 (HVVIKFKSMRTVTN) lie on the Cytoplasmic side of the membrane. The helical transmembrane segment at 88 to 108 (FFIANLAVADLLVNTLCLPFT) threads the bilayer. The Extracellular segment spans residues 109–125 (LTYTLMGEWKMGPVLCH). Cys-124 and Cys-204 are oxidised to a cystine. The chain crosses the membrane as a helical span at residues 126-146 (LVPYAQGLAVQVSTVTLTVIA). Over 147–166 (LDRHRCIVYHLDSKISKQNS) the chain is Cytoplasmic. The chain crosses the membrane as a helical span at residues 167 to 187 (FLIIGLAWGISALLASPLAIF). Residues 188 to 217 (REYSLIEIIPDFEIVACTEKWPGEEKSIYG) lie on the Extracellular side of the membrane. Residues 218-238 (TVYSLSSLLILYVLPLGIISV) form a helical membrane-spanning segment. The Cytoplasmic segment spans residues 239–269 (SYVRIWSKLKNHVSPGAANDHYHQRRQKTTK). Residues 270–290 (MLVFVVVVFAVSWLPLHAFQL) form a helical membrane-spanning segment. Residues 291-305 (AVDIDSQVLDLKEYK) are Extracellular-facing. A helical transmembrane segment spans residues 306-326 (LIFTVFHIIAMCSTFANPLLY). Over 327–381 (GWMNSNYRKAFLSAFRCQQRLDAIQSEVCVTGKAKTNVEVEKNHGAADSAEATNV) the chain is Cytoplasmic. Cys-343 carries S-palmitoyl cysteine lipidation.

This sequence belongs to the G-protein coupled receptor 1 family.

It localises to the cell membrane. Receptor for neuropeptide Y and peptide YY. The chain is Neuropeptide Y receptor type 2 (NPY2R) from Cavia porcellus (Guinea pig).